The following is a 551-amino-acid chain: Meiotically up-regulated gene 184 protein (551 aa).

One can recognise a J domain in the interval Asp-12–Phe-78. Polar residues predominate over residues Arg-85–Thr-122. Disordered stretches follow at residues Arg-85–Asp-153, Arg-176–Lys-226, and Glu-334–Asn-359. The segment covering Lys-124–Ser-133 has biased composition (basic and acidic residues). The span at Lys-134–Lys-146 shows a compositional bias: basic residues. 2 stretches are compositionally biased toward basic and acidic residues: residues Arg-176–Asn-187 and Gly-203–Glu-219.

Its subcellular location is the cytoplasm. The protein resides in the cytoskeleton. Has a role in sporulation. This Schizosaccharomyces pombe (strain 972 / ATCC 24843) (Fission yeast) protein is Meiotically up-regulated gene 184 protein (mug184).